The primary structure comprises 292 residues: MGRQKELMNRCGEMLHIRYRLLRQALAECLGTLILVMFGCGSVAQVVLSRGTHGGFLTINLAFGFAVTLAILVAGQVSGAHLNPAVTFAMCFLAREPWIKLPIYTLAQTLGAFLGAGIVFGLYYDAIWAFAGNELVVSGPNGTAGIFATYPSGHLDMVNGFFDQFIGTAALIVCVLAIVDPYNNPVPRGLEAFTVGLVVLVIGTSMGFNSGYAVNPARDFGPRLFTALAGWGSEVFTTGQNWWWVPIVSPLLGSIGGVFVYQLMIGCHLEQPPPSTEAENVKLAHMKHKEQI.

Residues 1–24 (MGRQKELMNRCGEMLHIRYRLLRQ) lie on the Cytoplasmic side of the membrane. A helical transmembrane segment spans residues 25–42 (ALAECLGTLILVMFGCGS). The Extracellular portion of the chain corresponds to 43-56 (VAQVVLSRGTHGGF). A helical membrane pass occupies residues 57–74 (LTINLAFGFAVTLAILVA). The Cytoplasmic portion of the chain corresponds to 75 to 78 (GQVS). Positions 79–92 (GAHLNPAVTFAMCF) form an intramembrane region, discontinuously helical. Residues 83–85 (NPA) carry the NPA 1 motif. The Cytoplasmic portion of the chain corresponds to 93-100 (LAREPWIK). Residues 101 to 121 (LPIYTLAQTLGAFLGAGIVFG) form a helical membrane-spanning segment. The Extracellular portion of the chain corresponds to 122 to 159 (LYYDAIWAFAGNELVVSGPNGTAGIFATYPSGHLDMVN). N-linked (GlcNAc...) asparagine glycosylation is present at Asn141. Residues 160–177 (GFFDQFIGTAALIVCVLA) form a helical membrane-spanning segment. At 178–189 (IVDPYNNPVPRG) the chain is on the cytoplasmic side. Residues 190-206 (LEAFTVGLVVLVIGTSM) traverse the membrane as a helical segment. Topologically, residues 207–210 (GFNS) are extracellular. The segment at residues 211–224 (GYAVNPARDFGPRL) is an intramembrane region (discontinuously helical). An NPA 2 motif is present at residues 215 to 217 (NPA). The Extracellular segment spans residues 225–242 (FTALAGWGSEVFTTGQNW). Residues 243 to 264 (WWVPIVSPLLGSIGGVFVYQLM) form a helical membrane-spanning segment. At 265 to 292 (IGCHLEQPPPSTEAENVKLAHMKHKEQI) the chain is on the cytoplasmic side.

This sequence belongs to the MIP/aquaporin (TC 1.A.8) family. As to quaternary structure, homotetramer; each monomer provides an independent glycerol/water pore. Could also exist in other oligomeric states. As to expression, detected in kidney medulla and papilla, in collecting duct cells. Detected in colon.

Its subcellular location is the cell membrane. The protein resides in the basolateral cell membrane. The catalysed reaction is glycerol(in) = glycerol(out). The enzyme catalyses H2O(in) = H2O(out). It catalyses the reaction urea(in) = urea(out). It carries out the reaction H2O2(out) = H2O2(in). Channel activity is inhibited by mercury ions. Its function is as follows. Aquaglyceroporins form homotetrameric transmembrane channels, with each monomer independently mediating glycerol and water transport across the plasma membrane along their osmotic gradient. Could also be permeable to urea. Also participates in cell permeability to H2O2 and H2O2-mediated signaling. In skin, transports glycerol to the epidermis and stratum corneum, where it maintains hydration, elasticity, and supports lipid biosynthesis for barrier repair. In kidney, contributes to the reabsorption of water, helping the body maintain proper fluid balance. This Rattus norvegicus (Rat) protein is Aquaporin-3.